The chain runs to 111 residues: Resistin-like gamma (111 aa).

Residues 1 to 23 (MKTAICSLLICIFLLQLMVPVNT) form the signal peptide. 5 disulfide bridges follow: cysteine 55/cysteine 108, cysteine 67/cysteine 107, cysteine 76/cysteine 93, cysteine 78/cysteine 95, and cysteine 82/cysteine 97.

The protein belongs to the resistin/FIZZ family. As to quaternary structure, homodimer. Heterodimer with RETNLB. As to expression, highly expressed in bone marrow, spleen and white blood cells. Also detected at low levels in thymus, lung, trachea, white adipose tissue, nasal respiratory epithelium, colon, small intestine, kidney, liver, and heart.

It is found in the secreted. Its function is as follows. Probable hormone. Promotes chemotaxis in myeloid cells. This is Resistin-like gamma from Rattus norvegicus (Rat).